The sequence spans 1857 residues: Phosphatidylinositol 3-kinase 2 (1857 aa).

2 stretches are compositionally biased toward low complexity: residues 1–32 (MKMS…SNGS) and 42–55 (NLSV…SNNS). Disordered regions lie at residues 1–61 (MKMS…KSST), 145–313 (TPLN…TNRV), 348–468 (SSSK…NSIR), 481–512 (ISSN…GERV), and 530–573 (ESDI…GPNV). Over residues 145–155 (TPLNRSRSGSI) the composition is skewed to polar residues. A compositionally biased stretch (low complexity) spans 162–269 (NNLTSSSSSS…NNNNNNNSNS (108 aa)). Polar residues predominate over residues 270 to 281 (GGSSRMITSKSQ). Composition is skewed to low complexity over residues 288–311 (TSNT…TPTN) and 352–464 (LLIP…QPSN). Residues 533–560 (ISSSPRSIGSPNSIRASISSQLPPSLSS) show a composition bias toward low complexity. Residues 561 to 570 (IGGGGGGGSG) are compositionally biased toward gly residues. Residues 821–934 (PNKITIMVLL…NQTVELSLTN (114 aa)) enclose the PI3K-RBD domain. The segment at 996–1078 (KETNKENKDS…SGSGNGSEQP (83 aa)) is disordered. Positions 997–1011 (ETNKENKDSNKENKD) are enriched in basic and acidic residues. Positions 1012-1056 (SSSNNNNNNNNNNNNNNNNNNNNNNNNNNNGNNNGNNSNNNSNSN) are enriched in low complexity. In terms of domain architecture, C2 PI3K-type spans 1099 to 1271 (VKRLFRVNIA…QPIILLVEFE (173 aa)). A PIK helical domain is found at 1326–1503 (PVGLKKLDLD…GLLLEGYLRS (178 aa)). The region spanning 1568-1845 (IIDKCRYMDS…NISVALNTKT (278 aa)) is the PI3K/PI4K catalytic domain. Residues 1574-1580 (YMDSKKL) are G-loop. Positions 1711–1719 (GIGDRHSDN) are catalytic loop. The interval 1730–1756 (HIDFGHFLGNYKKKYGFKRERAPFIFT) is activation loop.

It belongs to the PI3/PI4-kinase family.

The catalysed reaction is a 1,2-diacyl-sn-glycero-3-phospho-(1D-myo-inositol) + ATP = a 1,2-diacyl-sn-glycero-3-phospho-(1D-myo-inositol-3-phosphate) + ADP + H(+). The polypeptide is Phosphatidylinositol 3-kinase 2 (pikB) (Dictyostelium discoideum (Social amoeba)).